A 243-amino-acid polypeptide reads, in one-letter code: Triosephosphate isomerase (243 aa).

Asparagine 9–lysine 11 is a binding site for substrate. Histidine 96 functions as the Electrophile in the catalytic mechanism. The active-site Proton acceptor is glutamate 165. Residues glycine 171, serine 204, and glycine 225 to glycine 226 contribute to the substrate site.

The protein belongs to the triosephosphate isomerase family. In terms of assembly, homodimer.

The protein resides in the cytoplasm. It catalyses the reaction D-glyceraldehyde 3-phosphate = dihydroxyacetone phosphate. It participates in carbohydrate biosynthesis; gluconeogenesis. It functions in the pathway carbohydrate degradation; glycolysis; D-glyceraldehyde 3-phosphate from glycerone phosphate: step 1/1. Functionally, involved in the gluconeogenesis. Catalyzes stereospecifically the conversion of dihydroxyacetone phosphate (DHAP) to D-glyceraldehyde-3-phosphate (G3P). The chain is Triosephosphate isomerase from Prochlorococcus marinus (strain SARG / CCMP1375 / SS120).